Consider the following 308-residue polypeptide: MSNATKFGKVAVLLGGKSAERAVSLDSGQAVLDALLRSGVQAEAFDPQDRSVTELVNYDRAFIVLHGRGGEDGQIQGVLEWLNIPYTGTGVQGSAIGMDKVKTKQIWQGSDLPTAPYRIITKETDLDSVIAELGLPVIIKPVHEGSSVGMSKVEKAEDFAAAIEKATQHDAVVMAEKWITGREFTISFLNGQPLPVIRLQPPADVAFYDYEAKYQRNDVEYGIPCGLSETEEKKLQALCLRAFQAVGAEGWGRIDAMQDEQGNFWLLEVNTVPGMTSHSLVPKAAKAVGYSFDELCVAILEQTLEGTA.

The ATP-grasp domain maps to 104–301 (KQIWQGSDLP…FDELCVAILE (198 aa)). 130–185 (IAELGLPVIIKPVHEGSSVGMSKVEKAEDFAAAIEKATQHDAVVMAEKWITGREFT) serves as a coordination point for ATP. Mg(2+) is bound by residues aspartate 255, glutamate 268, and asparagine 270.

This sequence belongs to the D-alanine--D-alanine ligase family. The cofactor is Mg(2+). It depends on Mn(2+) as a cofactor.

It is found in the cytoplasm. It carries out the reaction 2 D-alanine + ATP = D-alanyl-D-alanine + ADP + phosphate + H(+). Its pathway is cell wall biogenesis; peptidoglycan biosynthesis. Functionally, cell wall formation. This Acinetobacter baumannii (strain ACICU) protein is D-alanine--D-alanine ligase.